A 173-amino-acid chain; its full sequence is Lipoprotein signal peptidase (173 aa).

4 helical membrane-spanning segments follow: residues 24–44 (PWLGLGVIWILLDQLTKIAIL), 55–75 (ITGFFNLVLAYNRGAAFSFLA), 80–100 (WQRWFFTGLGVAAALFIVWLL), and 105–125 (GQKLFCFALALILGGALGNVI). Catalysis depends on residues D135 and D153. The chain crosses the membrane as a helical span at residues 145–165 (HWPAFNVADCGICIGAVLLII).

Belongs to the peptidase A8 family.

The protein localises to the cell inner membrane. It carries out the reaction Release of signal peptides from bacterial membrane prolipoproteins. Hydrolyzes -Xaa-Yaa-Zaa-|-(S,diacylglyceryl)Cys-, in which Xaa is hydrophobic (preferably Leu), and Yaa (Ala or Ser) and Zaa (Gly or Ala) have small, neutral side chains.. Its pathway is protein modification; lipoprotein biosynthesis (signal peptide cleavage). Its function is as follows. This protein specifically catalyzes the removal of signal peptides from prolipoproteins. In Ralstonia nicotianae (strain ATCC BAA-1114 / GMI1000) (Ralstonia solanacearum), this protein is Lipoprotein signal peptidase.